Reading from the N-terminus, the 78-residue chain is Cytochrome c-551 (78 aa).

Positions 14, 17, 18, and 55 each coordinate heme c.

Binds 1 heme c group covalently per subunit.

This is Cytochrome c-551 from Halorhodospira halophila (Ectothiorhodospira halophila).